The sequence spans 535 residues: MSKLDLTKYGILNATEIIHNPSYEFLFEEETKAGLEGFEKGQLTELGAVNVMTGVYTGRSPKDKFFVMDDTTKNTIWWTSDEYKNDNKPVTPEAWKSIKKLAVEQLSGKRLFVVDTFCGANESSRLKIRFIMEVAWQAHFVKNMFIRPTEEELANYGEPDFVVMTASKAKVENYKELGLNSETAVVFNLTEKVQVILNTWYGGEMKKGMFSYMNYLLPLRGMASMHCSANTSMDEKETAIFFGLSGTGKTTLSTDPKRKLIGDDEHGWDKDGIFNFEGGCYAKVINLSRENEPDIYNAIRRNALLENVTVDAAGKIDFGDKSVTENTRVSYPIYHIENIVKPVSKAGHAKKVIFLSADAFGVLPPVSILTPEQTKYYFLSGFTAKLAGTERGITEPTPTFSACFGAAFLSLHPTKYAEELVKKMEMVGATAYLVNTGWNGTGKRISIKDTRGIIDAILDGSIDKAPTKAIPFFDFKVPTALPGVDPNILDPRDTYADAAEWTKKAKDLAERFIKNFVKFTGNDAGKALVAAGPKL.

3 residues coordinate substrate: R59, Y201, and K207. Residues K207, H226, and 243–251 (GLSGTGKTT) contribute to the ATP site. K207 and H226 together coordinate Mn(2+). Mn(2+) is bound at residue D264. ATP-binding positions include E292, R328, 444-445 (RI), and T450. R328 contacts substrate.

Belongs to the phosphoenolpyruvate carboxykinase (ATP) family. Requires Mn(2+) as cofactor.

The protein localises to the cytoplasm. The enzyme catalyses oxaloacetate + ATP = phosphoenolpyruvate + ADP + CO2. Its pathway is carbohydrate biosynthesis; gluconeogenesis. Functionally, involved in the gluconeogenesis. Catalyzes the conversion of oxaloacetate (OAA) to phosphoenolpyruvate (PEP) through direct phosphoryl transfer between the nucleoside triphosphate and OAA. In Porphyromonas gingivalis (strain ATCC 33277 / DSM 20709 / CIP 103683 / JCM 12257 / NCTC 11834 / 2561), this protein is Phosphoenolpyruvate carboxykinase (ATP).